The following is a 197-amino-acid chain: Phosphoheptose isomerase (197 aa).

The region spanning 40–197 (CIASIAQGGK…LVEHSIFGKQ (158 aa)) is the SIS domain. 55-57 (NGG) contacts substrate. The Zn(2+) site is built by His64 and Glu68. Substrate-binding positions include Glu68, 97 to 98 (ND), 123 to 125 (STS), Ser128, and Gln175. Gln175 and His183 together coordinate Zn(2+).

This sequence belongs to the SIS family. GmhA subfamily. As to quaternary structure, homotetramer. It depends on Zn(2+) as a cofactor.

The protein resides in the cytoplasm. The enzyme catalyses 2 D-sedoheptulose 7-phosphate = D-glycero-alpha-D-manno-heptose 7-phosphate + D-glycero-beta-D-manno-heptose 7-phosphate. Its pathway is carbohydrate biosynthesis; D-glycero-D-manno-heptose 7-phosphate biosynthesis; D-glycero-alpha-D-manno-heptose 7-phosphate and D-glycero-beta-D-manno-heptose 7-phosphate from sedoheptulose 7-phosphate: step 1/1. It participates in capsule biogenesis; capsule polysaccharide biosynthesis. Functionally, catalyzes the isomerization of sedoheptulose 7-phosphate in D-glycero-D-manno-heptose 7-phosphate. This Burkholderia pseudomallei (strain K96243) protein is Phosphoheptose isomerase (gmhA).